The primary structure comprises 329 residues: 4-hydroxythreonine-4-phosphate dehydrogenase (329 aa).

2 residues coordinate substrate: His-136 and Thr-137. 3 residues coordinate a divalent metal cation: His-166, His-211, and His-266. 3 residues coordinate substrate: Lys-274, Asn-283, and Arg-292.

The protein belongs to the PdxA family. In terms of assembly, homodimer. Zn(2+) serves as cofactor. Requires Mg(2+) as cofactor. The cofactor is Co(2+).

The protein resides in the cytoplasm. The enzyme catalyses 4-(phosphooxy)-L-threonine + NAD(+) = 3-amino-2-oxopropyl phosphate + CO2 + NADH. Its pathway is cofactor biosynthesis; pyridoxine 5'-phosphate biosynthesis; pyridoxine 5'-phosphate from D-erythrose 4-phosphate: step 4/5. Its function is as follows. Catalyzes the NAD(P)-dependent oxidation of 4-(phosphooxy)-L-threonine (HTP) into 2-amino-3-oxo-4-(phosphooxy)butyric acid which spontaneously decarboxylates to form 3-amino-2-oxopropyl phosphate (AHAP). This chain is 4-hydroxythreonine-4-phosphate dehydrogenase, found in Salmonella typhimurium (strain LT2 / SGSC1412 / ATCC 700720).